Consider the following 355-residue polypeptide: MRGKLLSFSLFGESHGKAVGVLVEGLPPGIEVSVEELKRELERRKGIERFATKRKETDEPKILSGVFRGRTTGTPVAVIVENRDVDSSYYEEIRNTPRPGHADYPAGIKYFGYNDYRGGGHFSGRLTVGVVIAGYFAKKLLEREGIKVRAYLKRIGRVEAHVSPEELLSSENPYCPDEGAFEAMVEEMERARKAGDSVGGIVEAVAFNVPPGLGGPWEEDIEADIASALFRIPAVKGVEFGLGFGLAELRGSQANDPFVLKDGKVVTETNNHGGVLGGMTTGMPLVVRAAFKPTPSIYLPQRTVDLGRMEEVTLKLRGRFDSCIVPKALPVVESSVAFVIADHLLRRRAWEGMVR.

Arg-44 and Arg-49 together coordinate NADP(+). Residues 121–123 (HFS), Gly-277, 292–296 (KPTPS), and Arg-319 contribute to the FMN site.

It belongs to the chorismate synthase family. The cofactor is FMNH2.

The catalysed reaction is 5-O-(1-carboxyvinyl)-3-phosphoshikimate = chorismate + phosphate. It participates in metabolic intermediate biosynthesis; chorismate biosynthesis; chorismate from D-erythrose 4-phosphate and phosphoenolpyruvate: step 7/7. In terms of biological role, catalyzes the anti-1,4-elimination of the C-3 phosphate and the C-6 proR hydrogen from 5-enolpyruvylshikimate-3-phosphate (EPSP) to yield chorismate, which is the branch point compound that serves as the starting substrate for the three terminal pathways of aromatic amino acid biosynthesis. This reaction introduces a second double bond into the aromatic ring system. This Thermococcus kodakarensis (strain ATCC BAA-918 / JCM 12380 / KOD1) (Pyrococcus kodakaraensis (strain KOD1)) protein is Chorismate synthase.